Here is a 116-residue protein sequence, read N- to C-terminus: Large ribosomal subunit protein bL17 (116 aa).

It belongs to the bacterial ribosomal protein bL17 family. Part of the 50S ribosomal subunit. Contacts protein L32.

The protein is Large ribosomal subunit protein bL17 of Gloeobacter violaceus (strain ATCC 29082 / PCC 7421).